The sequence spans 261 residues: MLNNFNKFVASSVSMVYLAVLSWATAYAYGWGQAAYHGYPWWHVVQGGSMIARSLAYVCVVSMVFVIGYLIGYQAFKFIKRFFGLLHVSWGASHLGFVKIFILLVIVSTPIMLLLYFYVGILSSYRLMGCVLSILAISLVCHKFGRAISFSIRLRELMSNEKYYQIFMAFIFVYVVVSAFSIGYLRSAFFTGYDIIEVENRPYYILVANGDEEFILGENIKHNSHFIFFNRKTLNHYTIHITPSPYLPYKNQLSAQIYHQE.

The chain is Protein TfpB (tfpB) from Moraxella bovis.